A 594-amino-acid polypeptide reads, in one-letter code: Actin-histidine N-methyltransferase (594 aa).

Residues 1–23 form a disordered region; sequence MGKKSRVKTQKSGTGATASVSPK. A compositionally biased stretch (polar residues) spans 10 to 23; that stretch reads QKSGTGATASVSPK. Residues arginine 75, 104–106, arginine 254, 275–279, and 325–327 each bind S-adenosyl-L-methionine; these read EGF, DMCNH, and SGF. Residues 94–314 form the SET domain; it reads EGFEMVSFKE…AGEQIYIFYG (221 aa). The disordered stretch occupies residues 553–594; that stretch reads INGENSIPNGTRLEKEDLNQEQSKRVTEDAKEPSDSTEEVKE. Over residues 564-594 the composition is skewed to basic and acidic residues; sequence RLEKEDLNQEQSKRVTEDAKEPSDSTEEVKE.

It belongs to the class V-like SAM-binding methyltransferase superfamily. SETD3 actin-histidine methyltransferase family. In terms of assembly, interacts with MYOD1. Phosphorylated by GSK3B, which is required for recognition by the SCF(FBXW7) complex and subsequent degradation. Post-translationally, ubiquitinated by the SCF(FBXW7) complex following phosphorylation by GSK3B, leading to its degradation by the proteasome.

It localises to the cytoplasm. The protein localises to the nucleus. It catalyses the reaction L-histidyl-[protein] + S-adenosyl-L-methionine = N(tele)-methyl-L-histidyl-[protein] + S-adenosyl-L-homocysteine + H(+). Its function is as follows. Protein-histidine N-methyltransferase that specifically mediates 3-methylhistidine (tele-methylhistidine) methylation of actin at 'His-73'. Histidine methylation of actin is required for smooth muscle contraction of the laboring uterus during delivery. Does not have protein-lysine N-methyltransferase activity and probably only catalyzes histidine methylation of actin. The sequence is that of Actin-histidine N-methyltransferase from Rhinolophus ferrumequinum (Greater horseshoe bat).